The following is a 150-amino-acid chain: Probable deoxyuridine 5'-triphosphate nucleotidohydrolase (150 aa).

Belongs to the dCTP deaminase family. Archaeal dUTPase subfamily.

It catalyses the reaction dUTP + H2O = dUMP + diphosphate + H(+). The protein operates within pyrimidine metabolism; dUMP biosynthesis; dUMP from dCTP (dUTP route): step 2/2. In terms of biological role, this enzyme is involved in nucleotide metabolism: it produces dUMP, the immediate precursor of thymidine nucleotides and it decreases the intracellular concentration of dUTP so that uracil cannot be incorporated into DNA. This chain is Probable deoxyuridine 5'-triphosphate nucleotidohydrolase, found in Methanothermobacter thermautotrophicus (strain ATCC 29096 / DSM 1053 / JCM 10044 / NBRC 100330 / Delta H) (Methanobacterium thermoautotrophicum).